The following is a 414-amino-acid chain: Serine hydroxymethyltransferase (414 aa).

Residues leucine 121 and 125–127 contribute to the (6S)-5,6,7,8-tetrahydrofolate site; that span reads GHL. Lysine 229 carries the post-translational modification N6-(pyridoxal phosphate)lysine.

The protein belongs to the SHMT family. As to quaternary structure, homodimer. The cofactor is pyridoxal 5'-phosphate.

The protein localises to the cytoplasm. The catalysed reaction is (6R)-5,10-methylene-5,6,7,8-tetrahydrofolate + glycine + H2O = (6S)-5,6,7,8-tetrahydrofolate + L-serine. It participates in one-carbon metabolism; tetrahydrofolate interconversion. The protein operates within amino-acid biosynthesis; glycine biosynthesis; glycine from L-serine: step 1/1. In terms of biological role, catalyzes the reversible interconversion of serine and glycine with tetrahydrofolate (THF) serving as the one-carbon carrier. This reaction serves as the major source of one-carbon groups required for the biosynthesis of purines, thymidylate, methionine, and other important biomolecules. Also exhibits THF-independent aldolase activity toward beta-hydroxyamino acids, producing glycine and aldehydes, via a retro-aldol mechanism. The protein is Serine hydroxymethyltransferase of Polaromonas naphthalenivorans (strain CJ2).